We begin with the raw amino-acid sequence, 365 residues long: Phosphatidylcholine:ceramide cholinephosphotransferase 2 (365 aa).

A compositionally biased stretch (basic and acidic residues) spans 1 to 14 (MDIIETAKLEEHLE). The disordered stretch occupies residues 1 to 52 (MDIIETAKLEEHLENQPSDPTNTYTRPTEPVEEENKNGNGKPKSLSSGLRKG). Over residues 15 to 26 (NQPSDPTNTYTR) the composition is skewed to polar residues. The next 5 membrane-spanning stretches (helical) occupy residues 80–100 (GIAFIYAVFNLVLTTVMITVV), 128–148 (FSVSEINGIILVGLWITQWLF), 159–179 (FCFIIGTLYLYRCITMYVTTL), 218–240 (HILCGDFLFSGHTVTLTLTYLFI), and 248–268 (FWWYHLICWLLSAAGIICILV). The active site involves His-229. Active-site residues include His-272 and Asp-276. Residues 273–290 (YTVDVIIAYYITTRLFWW) traverse the membrane as a helical segment. Residues 291–365 (YHSMANEKNL…KIGEDNEKST (75 aa)) lie on the Cytoplasmic side of the membrane. Residues Cys-331, Cys-332, Cys-343, and Cys-348 are each lipidated (S-palmitoyl cysteine).

Belongs to the sphingomyelin synthase family. Post-translationally, palmitoylated on Cys-331, Cys-332, Cys-343 and Cys-348; which plays an important role in plasma membrane localization.

The protein localises to the cell membrane. The protein resides in the golgi apparatus membrane. It carries out the reaction an N-acylsphing-4-enine + a 1,2-diacyl-sn-glycero-3-phosphocholine = a sphingomyelin + a 1,2-diacyl-sn-glycerol. It catalyses the reaction an N-acylsphinganine + a 1,2-diacyl-sn-glycero-3-phosphocholine = an N-acylsphinganine-1-phosphocholine + a 1,2-diacyl-sn-glycerol. The enzyme catalyses an N-acyl-(4R)-4-hydroxysphinganine + a 1,2-diacyl-sn-glycero-3-phosphocholine = an N-acyl-(4R)-4-hydroxysphinganine-phosphocholine + a 1,2-diacyl-sn-glycerol. The catalysed reaction is an N-acylsphing-4-enine + a 1,2-diacyl-sn-glycero-3-phosphoethanolamine = an N-acylsphing-4-enine 1-phosphoethanolamine + a 1,2-diacyl-sn-glycerol. It carries out the reaction an N-acylsphinganine + a 1,2-diacyl-sn-glycero-3-phosphoethanolamine = an N-acylsphinganine-1-phosphoethanolamine + a 1,2-diacyl-sn-glycerol. It catalyses the reaction an N-acyl-(4R)-4-hydroxysphinganine + a 1,2-diacyl-sn-glycero-3-phosphoethanolamine = an N-acyl-(4R)-4-hydroxysphinganine-1-phosphoethanolamine + a 1,2-diacyl-sn-glycerol. The enzyme catalyses 1,2-dihexadecanoyl-sn-glycero-3-phosphocholine + an N-acylsphing-4-enine = 1,2-dihexadecanoyl-sn-glycerol + a sphingomyelin. The catalysed reaction is 1-(9Z-octadecenoyl)-2-acyl-sn-3-glycerol + a sphingomyelin = a 1-(9Z-octadecenoyl)-2-acyl-sn-glycero-3-phosphocholine + an N-acylsphing-4-enine. It carries out the reaction N-hexadecanoylsphinganine + a 1,2-diacyl-sn-glycero-3-phosphocholine = N-hexadecanoyl-sphinganine-1-phosphocholine + a 1,2-diacyl-sn-glycerol. It catalyses the reaction N-hexadecanoyl-(4R)-hydroxysphinganine + a 1,2-diacyl-sn-glycero-3-phosphocholine = N-hexadecanoyl-(4R)-hydroxysphinganine-phosphocholine + a 1,2-diacyl-sn-glycerol. The enzyme catalyses N-hexadecanoylsphinganine + a 1,2-diacyl-sn-glycero-3-phosphoethanolamine = N-hexadecanoyl-sphinganine-1-phosphoethanolamine + a 1,2-diacyl-sn-glycerol. The catalysed reaction is N-hexadecanoyl-(4R)-hydroxysphinganine + a 1,2-diacyl-sn-glycero-3-phosphoethanolamine = N-hexadecanoyl-(4R)-hydroxysphinganine-1-phosphoethanolamine + a 1,2-diacyl-sn-glycerol. It functions in the pathway sphingolipid metabolism. In terms of biological role, sphingomyelin synthase that primarily contributes to sphingomyelin synthesis and homeostasis at the plasma membrane. Catalyzes the reversible transfer of phosphocholine moiety in sphingomyelin biosynthesis: in the forward reaction transfers phosphocholine head group of phosphatidylcholine (PC) on to ceramide (CER) to form ceramide phosphocholine (sphingomyelin, SM) and diacylglycerol (DAG) as by-product, and in the reverse reaction transfers phosphocholine from SM to DAG to form PC and CER. The direction of the reaction appears to depend on the levels of CER and DAG in the plasma membrane. Does not use free phosphorylcholine or CDP-choline as donors. Can also transfer phosphoethanolamine head group of phosphatidylethanolamine (PE) on to ceramide (CER) to form ceramide phosphoethanolamine (CPE). Regulates receptor-mediated signal transduction via mitogenic DAG and proapoptotic CER, as well as via SM, a structural component of membrane rafts that serve as platforms for signal transduction and protein sorting. To a lesser extent, plays a role in secretory transport via regulation of DAG pool at the Golgi apparatus and its downstream effects on PRKD1. Required for normal bone matrix mineralization. This is Phosphatidylcholine:ceramide cholinephosphotransferase 2 (SGMS2) from Macaca fascicularis (Crab-eating macaque).